Reading from the N-terminus, the 685-residue chain is Mitotic interactor and substrate of PLK1 (685 aa).

At Ser-78 the chain carries Phosphoserine; by CDK1. 2 disordered regions span residues 155–181 (SGTV…STPL) and 207–253 (NKEV…QGKG). Position 172 is a phosphothreonine; by CDK1 (Thr-172). Thr-179 carries the phosphothreonine modification. At Ser-214 the chain carries Phosphoserine; by CDK1. Phosphothreonine is present on Thr-219. Ser-284 bears the Phosphoserine; by CDK1 mark. Position 287 is a phosphothreonine; by CDK1 (Thr-287). The interval 345-499 (GRPSLYVQRD…PWKLPRGSPQ (155 aa)) is disordered. At Ser-348 the chain carries Phosphoserine. Residues 355 to 371 (MVQETQREEDHRREGLH) are compositionally biased toward basic and acidic residues. Phosphothreonine; by CDK1 is present on Thr-377. Position 382 is a phosphoserine (Ser-382). A compositionally biased stretch (low complexity) spans 392-417 (ALSSDSILSPDSILSPAPDARAADPA). Phosphoserine; by PLK1 occurs at positions 394, 395, and 397. A phosphoserine mark is found at Ser-406 and Ser-436. Polar residues predominate over residues 454–469 (SGLSTVDTEAATSPKA). Ser-477 carries the phosphoserine; by PLK1 modification. Positions 478–488 (ESSGKPMSTKQ) are enriched in polar residues. Phosphoserine occurs at positions 547 and 549. A coiled-coil region spans residues 551-575 (DLLERERESVLRREREVAEERRNAL). Disordered regions lie at residues 575–607 (LFPE…SYSV) and 629–651 (PVDS…NPSD). Ser-581 is modified (phosphoserine; by PLK1). The residue at position 583 (Thr-583) is a Phosphothreonine. Over residues 589 to 607 (DQNSRSSSQASGITGSYSV) the composition is skewed to polar residues. Ser-592 is modified (phosphoserine; by PLK1). Position 681 is a phosphoserine (Ser-681).

Belongs to the MISP family. As to quaternary structure, associates with F-actin. Interacts with DCTN1; this interaction regulates DCTN1 distribution at the cell cortex. Interacts with PTK2/FAK and MAPRE1. Phosphorylated by CDK1 and PLK1. CDK1 is the priming kinase for PLK1 phosphorylation. Phosphorylation by PLK1 is required for proper spindle orientation at metaphase.

The protein localises to the cell junction. The protein resides in the focal adhesion. It localises to the cytoplasm. Its subcellular location is the cytoskeleton. It is found in the cell cortex. Its function is as follows. Plays a role in mitotic spindle orientation and mitotic progression. Regulates the distribution of dynactin at the cell cortex in a PLK1-dependent manner, thus stabilizing cortical and astral microtubule attachments required for proper mitotic spindle positioning. May link microtubules to the actin cytospkeleton and focal adhesions. May be required for directed cell migration and centrosome orientation. May also be necessary for proper stacking of the Golgi apparatus. In Pongo abelii (Sumatran orangutan), this protein is Mitotic interactor and substrate of PLK1.